Here is a 393-residue protein sequence, read N- to C-terminus: MDLFEYQARDLFAKHGVPVLAGEVIDTPEAAREATEKLGGKSVVKAQVKVGGRGKAGGVKLAADPDEAVARATDILGMDIKGHTVHKVMIAELSPEIEAEYYVSYLLDRTNRTFLAMASVQGGMDIEEVAEKTPEALAKVPVNAVDGVDIAKAREIVAQAKFPADVAEGVAEALVTLWDTFVAEDALLVEVNPLVKTKDGRILALDGKVSLDENADFRQPDHEALEDKDAANPLEAAAKAKNLNYVKLDGEVGIIGNGAGLVMSTLDVVAYAGENHGNVKPANFLDIGGGASAEVMANGLEIILGDPDVRSVFVNVFGGITACDEVANGIVQALALLESKGEKVEKPLVVRLDGNNAELGRKILSDANHPLVQRVDTMDGAADKAAELAAAAK.

One can recognise an ATP-grasp domain in the interval 9 to 237 (RDLFAKHGVP…KDAANPLEAA (229 aa)). Residues Lys-45, 52 to 54 (GRG), Glu-92, Pro-95, and Glu-100 each bind ATP. Mg(2+)-binding residues include Asn-192 and Asp-206. Residues Asn-257 and 319-321 (GIT) contribute to the substrate site.

This sequence belongs to the succinate/malate CoA ligase beta subunit family. Heterotetramer of two alpha and two beta subunits. It depends on Mg(2+) as a cofactor.

The enzyme catalyses succinate + ATP + CoA = succinyl-CoA + ADP + phosphate. It catalyses the reaction GTP + succinate + CoA = succinyl-CoA + GDP + phosphate. The protein operates within carbohydrate metabolism; tricarboxylic acid cycle; succinate from succinyl-CoA (ligase route): step 1/1. Its function is as follows. Succinyl-CoA synthetase functions in the citric acid cycle (TCA), coupling the hydrolysis of succinyl-CoA to the synthesis of either ATP or GTP and thus represents the only step of substrate-level phosphorylation in the TCA. The beta subunit provides nucleotide specificity of the enzyme and binds the substrate succinate, while the binding sites for coenzyme A and phosphate are found in the alpha subunit. This is Succinate--CoA ligase [ADP-forming] subunit beta from Streptomyces griseus subsp. griseus (strain JCM 4626 / CBS 651.72 / NBRC 13350 / KCC S-0626 / ISP 5235).